A 67-amino-acid polypeptide reads, in one-letter code: Sec-independent protein translocase protein TatA (67 aa).

The chain crosses the membrane as a helical span at residues 1–21 (MGSFSLTHWIIVLIIVVLIFG). The disordered stretch occupies residues 43 to 67 (LNEGTDGKEAQKDDVIEHKKDEDKA). The span at 47-67 (TDGKEAQKDDVIEHKKDEDKA) shows a compositional bias: basic and acidic residues.

It belongs to the TatA/E family. In terms of assembly, the Tat system comprises two distinct complexes: a TatABC complex, containing multiple copies of TatA, TatB and TatC subunits, and a separate TatA complex, containing only TatA subunits. Substrates initially bind to the TatABC complex, which probably triggers association of the separate TatA complex to form the active translocon.

The protein resides in the cell inner membrane. Its function is as follows. Part of the twin-arginine translocation (Tat) system that transports large folded proteins containing a characteristic twin-arginine motif in their signal peptide across membranes. TatA could form the protein-conducting channel of the Tat system. This is Sec-independent protein translocase protein TatA from Neisseria gonorrhoeae (strain ATCC 700825 / FA 1090).